Reading from the N-terminus, the 152-residue chain is Ribosome maturation factor RimP (152 aa).

Belongs to the RimP family.

It localises to the cytoplasm. Functionally, required for maturation of 30S ribosomal subunits. The protein is Ribosome maturation factor RimP of Clostridium beijerinckii (strain ATCC 51743 / NCIMB 8052) (Clostridium acetobutylicum).